We begin with the raw amino-acid sequence, 707 residues long: Prolyl endopeptidase-like (707 aa).

Residues serine 538, aspartate 624, and histidine 670 each act as charge relay system in the active site.

This sequence belongs to the peptidase S9A family. Homodimer.

The protein resides in the cytoplasm. Its subcellular location is the cytosol. Serine peptidase whose precise substrate specificity remains unclear. Does not cleave peptides after a arginine or lysine residue. Regulates trans-Golgi network morphology and sorting by regulating the membrane binding of the AP-1 complex. May play a role in the regulation of synaptic vesicle exocytosis. In Xenopus laevis (African clawed frog), this protein is Prolyl endopeptidase-like (prepl).